The primary structure comprises 83 residues: Small ribosomal subunit protein bS16 (83 aa).

The protein belongs to the bacterial ribosomal protein bS16 family.

The polypeptide is Small ribosomal subunit protein bS16 (Pseudomonas putida (strain W619)).